We begin with the raw amino-acid sequence, 256 residues long: Hydroxyacylglutathione hydrolase (256 aa).

Zn(2+) is bound by residues histidine 55, histidine 57, aspartate 59, histidine 60, histidine 113, aspartate 132, and histidine 170.

The protein belongs to the metallo-beta-lactamase superfamily. Glyoxalase II family. Monomer. Zn(2+) serves as cofactor.

It catalyses the reaction an S-(2-hydroxyacyl)glutathione + H2O = a 2-hydroxy carboxylate + glutathione + H(+). It participates in secondary metabolite metabolism; methylglyoxal degradation; (R)-lactate from methylglyoxal: step 2/2. Functionally, thiolesterase that catalyzes the hydrolysis of S-D-lactoyl-glutathione to form glutathione and D-lactic acid. This is Hydroxyacylglutathione hydrolase from Methylococcus capsulatus (strain ATCC 33009 / NCIMB 11132 / Bath).